Here is a 392-residue protein sequence, read N- to C-terminus: 1-deoxy-D-xylulose 5-phosphate reductoisomerase (392 aa).

Threonine 10, glycine 11, serine 12, isoleucine 13, asparagine 38, and asparagine 124 together coordinate NADPH. Lysine 125 is a 1-deoxy-D-xylulose 5-phosphate binding site. Position 126 (glutamate 126) interacts with NADPH. Position 150 (aspartate 150) interacts with Mn(2+). 1-deoxy-D-xylulose 5-phosphate-binding residues include serine 151, glutamate 152, serine 176, and histidine 199. Glutamate 152 is a binding site for Mn(2+). Glycine 205 is a binding site for NADPH. Residues serine 212, asparagine 217, lysine 218, and glutamate 221 each coordinate 1-deoxy-D-xylulose 5-phosphate. Glutamate 221 serves as a coordination point for Mn(2+).

This sequence belongs to the DXR family. It depends on Mg(2+) as a cofactor. The cofactor is Mn(2+).

It catalyses the reaction 2-C-methyl-D-erythritol 4-phosphate + NADP(+) = 1-deoxy-D-xylulose 5-phosphate + NADPH + H(+). It participates in isoprenoid biosynthesis; isopentenyl diphosphate biosynthesis via DXP pathway; isopentenyl diphosphate from 1-deoxy-D-xylulose 5-phosphate: step 1/6. In terms of biological role, catalyzes the NADPH-dependent rearrangement and reduction of 1-deoxy-D-xylulose-5-phosphate (DXP) to 2-C-methyl-D-erythritol 4-phosphate (MEP). This Gloeobacter violaceus (strain ATCC 29082 / PCC 7421) protein is 1-deoxy-D-xylulose 5-phosphate reductoisomerase.